We begin with the raw amino-acid sequence, 423 residues long: COP9 signalosome complex subunit 3 (423 aa).

Residue Ala2 is modified to N-acetylalanine. A PCI domain is found at 197–365 (NFERALYFYE…GMVSFHDNPE (169 aa)). A disordered region spans residues 402–423 (QFVQKSMGSQEDDSGNKPSSYS). Phosphoserine occurs at positions 407, 410, and 423.

This sequence belongs to the CSN3 family. In terms of assembly, component of the CSN complex, composed of COPS1/GPS1, COPS2, COPS3, COPS4, COPS5, COPS6, COPS7 (COPS7A or COPS7B), COPS8 and COPS9. In the complex, it probably interacts directly with COPS1, COPS4, COPS8 and COPS9. Interacts with CK2 and PKD. Interacts with the translation initiation factor EIF3S6 and IKBKG. Interacts with ERCC6.

Its subcellular location is the cytoplasm. The protein resides in the nucleus. In terms of biological role, component of the COP9 signalosome complex (CSN), a complex involved in various cellular and developmental processes. The CSN complex is an essential regulator of the ubiquitin (Ubl) conjugation pathway by mediating the deneddylation of the cullin subunits of SCF-type E3 ligase complexes, leading to decrease the Ubl ligase activity of SCF-type complexes such as SCF, CSA or DDB2. The complex is also involved in phosphorylation of p53/TP53, c-jun/JUN, IkappaBalpha/NFKBIA, ITPK1 and IRF8/ICSBP, possibly via its association with CK2 and PKD kinases. CSN-dependent phosphorylation of TP53 and JUN promotes and protects degradation by the Ubl system, respectively. Essential to maintain the survival of epiblast cells and thus the development of the postimplantation embryo. This chain is COP9 signalosome complex subunit 3 (COPS3), found in Bos taurus (Bovine).